A 364-amino-acid chain; its full sequence is MAQRWGPHALSGVQAQDAYEDSTQASLFTYTNSNNTRGPFEGPNYHIAPRWVYHLTSAWMTIVVIASIFTNGLVLVATMRFKKLRHPLNWILVNLAVADLAETVIASTISVVNQVYGYFVLGHPLCVVEGYTVSLCGITGLWSLAIISWERWLVVCKPFGNVRFDAKLAIVGIVFSWVWSAVWTAPPIFGWSRYWPYGLKTSCGPDVFSGTSYPGVQSYMMVLMVTCCITPLSIIVLCYLHVWLAIRAVAKQQKESESTQKAEKEVTRMVVVMVLAYCLCWGPYAFFACFATANPGYSFHPLVAALPAYFAKSATIYNPIIYVFMNRQFRNCILQLFGKKVEDSSELSSTSRTEASSVSSVSPA.

Topologically, residues 1–52 (MAQRWGPHALSGVQAQDAYEDSTQASLFTYTNSNNTRGPFEGPNYHIAPRWV) are extracellular. Residues 17-43 (DAYEDSTQASLFTYTNSNNTRGPFEGP) form a required for 11-cis-retinal regeneration region. N-linked (GlcNAc...) asparagine glycosylation is present at asparagine 34. A helical transmembrane segment spans residues 53-77 (YHLTSAWMTIVVIASIFTNGLVLVA). Residues 78-89 (TMRFKKLRHPLN) lie on the Cytoplasmic side of the membrane. The chain crosses the membrane as a helical span at residues 90 to 115 (WILVNLAVADLAETVIASTISVVNQV). The Extracellular segment spans residues 116–129 (YGYFVLGHPLCVVE). Cysteine 126 and cysteine 203 are disulfide-bonded. The chain crosses the membrane as a helical span at residues 130-149 (GYTVSLCGITGLWSLAIISW). Topologically, residues 150-168 (ERWLVVCKPFGNVRFDAKL) are cytoplasmic. A helical membrane pass occupies residues 169–192 (AIVGIVFSWVWSAVWTAPPIFGWS). Over 193–218 (RYWPYGLKTSCGPDVFSGTSYPGVQS) the chain is Extracellular. A helical transmembrane segment spans residues 219 to 246 (YMMVLMVTCCITPLSIIVLCYLHVWLAI). Residues 247 to 268 (RAVAKQQKESESTQKAEKEVTR) lie on the Cytoplasmic side of the membrane. Residues 269–292 (MVVVMVLAYCLCWGPYAFFACFAT) traverse the membrane as a helical segment. Over 293-300 (ANPGYSFH) the chain is Extracellular. Residues 301-325 (PLVAALPAYFAKSATIYNPIIYVFM) form a helical membrane-spanning segment. Lysine 312 is modified (N6-(retinylidene)lysine). Over 326–364 (NRQFRNCILQLFGKKVEDSSELSSTSRTEASSVSSVSPA) the chain is Cytoplasmic.

The protein belongs to the G-protein coupled receptor 1 family. Opsin subfamily. As to quaternary structure, monomer. Homodimer. Homotetramer. O-glycosylated. Post-translationally, phosphorylated on some or all of the serine and threonine residues present in the C-terminal region. In terms of tissue distribution, expressed in cone photoreceptor cells.

The protein resides in the membrane. Its function is as follows. Visual pigments are the light-absorbing molecules that mediate vision. They consist of an apoprotein, opsin, covalently linked to cis-retinal. May increase spectral sensitivity in dim light. This is Medium-wave-sensitive opsin 1 (OPN1MW) from Cavia porcellus (Guinea pig).